A 243-amino-acid chain; its full sequence is Small ribosomal subunit protein uS3 (243 aa).

Positions 38–106 (IRKYLNARLA…DIQINIFEVK (69 aa)) constitute a KH type-2 domain. The segment at 214 to 243 (PNFTQSKESGRGNNGGNNGGKNFKRKKNNR) is disordered.

Belongs to the universal ribosomal protein uS3 family. As to quaternary structure, part of the 30S ribosomal subunit. Forms a tight complex with proteins S10 and S14.

Its function is as follows. Binds the lower part of the 30S subunit head. Binds mRNA in the 70S ribosome, positioning it for translation. The polypeptide is Small ribosomal subunit protein uS3 (Bacteroides thetaiotaomicron (strain ATCC 29148 / DSM 2079 / JCM 5827 / CCUG 10774 / NCTC 10582 / VPI-5482 / E50)).